The primary structure comprises 903 residues: Protein translocase subunit SecA (903 aa).

ATP-binding positions include glutamine 87, 105–109 (GEGKT), and aspartate 507. The tract at residues 854–893 (STMADSSGDVKSSTAESKAPYVRDGRKVGRNEPCPCGSGK) is disordered. Residues 856–869 (MADSSGDVKSSTAE) are compositionally biased toward polar residues. A compositionally biased stretch (basic and acidic residues) spans 874–883 (YVRDGRKVGR). 4 residues coordinate Zn(2+): cysteine 887, cysteine 889, cysteine 898, and histidine 899.

The protein belongs to the SecA family. Monomer and homodimer. Part of the essential Sec protein translocation apparatus which comprises SecA, SecYEG and auxiliary proteins SecDF-YajC and YidC. It depends on Zn(2+) as a cofactor.

The protein localises to the cell inner membrane. The protein resides in the cytoplasm. The catalysed reaction is ATP + H2O + cellular proteinSide 1 = ADP + phosphate + cellular proteinSide 2.. Its function is as follows. Part of the Sec protein translocase complex. Interacts with the SecYEG preprotein conducting channel. Has a central role in coupling the hydrolysis of ATP to the transfer of proteins into and across the cell membrane, serving both as a receptor for the preprotein-SecB complex and as an ATP-driven molecular motor driving the stepwise translocation of polypeptide chains across the membrane. This Nitrosococcus oceani (strain ATCC 19707 / BCRC 17464 / JCM 30415 / NCIMB 11848 / C-107) protein is Protein translocase subunit SecA.